The sequence spans 167 residues: Swarming motility protein SwrB (167 aa).

The interval 63–105 (IENKASSASQSDEESQKSGLQTSETYQERDPVQEAENLPEHIE) is disordered. Positions 88 to 105 (YQERDPVQEAENLPEHIE) are enriched in basic and acidic residues.

Its function is as follows. Required for swarming motility and for maximal sigma-D activity. The sequence is that of Swarming motility protein SwrB (swrB) from Bacillus subtilis (strain 168).